The following is a 436-amino-acid chain: L-threonine dehydratase biosynthetic IlvA (436 aa).

Positions 1-357 are catalytic; that stretch reads MSETYVSEKS…HRGLKHYFLV (357 aa). K70 is subject to N6-(pyridoxal phosphate)lysine. Residues N97, 203–207, and S329 contribute to the pyridoxal 5'-phosphate site; that span reads GGGGL. The 75-residue stretch at 353–427 folds into the ACT-like domain; it reads HYFLVNFPQK…SAIDSRRLEP (75 aa). Residues 358 to 436 form a regulatory region; it reads NFPQKPGQLR…PGTPEYEYLT (79 aa).

Belongs to the serine/threonine dehydratase family. Homotetramer. Requires pyridoxal 5'-phosphate as cofactor.

The enzyme catalyses L-threonine = 2-oxobutanoate + NH4(+). It functions in the pathway amino-acid biosynthesis; L-isoleucine biosynthesis; 2-oxobutanoate from L-threonine: step 1/1. Catalyzes the anaerobic formation of alpha-ketobutyrate and ammonia from threonine in a two-step reaction. The first step involved a dehydration of threonine and a production of enamine intermediates (aminocrotonate), which tautomerizes to its imine form (iminobutyrate). Both intermediates are unstable and short-lived. The second step is the nonenzymatic hydrolysis of the enamine/imine intermediates to form 2-ketobutyrate and free ammonia. In the low water environment of the cell, the second step is accelerated by RidA. This chain is L-threonine dehydratase biosynthetic IlvA (ilvA), found in Corynebacterium glutamicum (strain ATCC 13032 / DSM 20300 / JCM 1318 / BCRC 11384 / CCUG 27702 / LMG 3730 / NBRC 12168 / NCIMB 10025 / NRRL B-2784 / 534).